Consider the following 174-residue polypeptide: Ribosome maturation factor RimP (174 aa).

It belongs to the RimP family.

The protein resides in the cytoplasm. Functionally, required for maturation of 30S ribosomal subunits. In Acinetobacter baumannii (strain SDF), this protein is Ribosome maturation factor RimP.